The sequence spans 274 residues: 4-diphosphocytidyl-2-C-methyl-D-erythritol kinase (274 aa).

The active site involves Lys10. 101-111 is a binding site for ATP; that stretch reads PTQAGLGGGSA. Asp143 is a catalytic residue.

It belongs to the GHMP kinase family. IspE subfamily.

It catalyses the reaction 4-CDP-2-C-methyl-D-erythritol + ATP = 4-CDP-2-C-methyl-D-erythritol 2-phosphate + ADP + H(+). It participates in isoprenoid biosynthesis; isopentenyl diphosphate biosynthesis via DXP pathway; isopentenyl diphosphate from 1-deoxy-D-xylulose 5-phosphate: step 3/6. In terms of biological role, catalyzes the phosphorylation of the position 2 hydroxy group of 4-diphosphocytidyl-2C-methyl-D-erythritol. The polypeptide is 4-diphosphocytidyl-2-C-methyl-D-erythritol kinase (Helicobacter pylori (strain HPAG1)).